The chain runs to 902 residues: Desmocollin-2 (902 aa).

The first 27 residues, 1 to 27 (MAAVGSMRSGSPAFGLGHLLTLAILAL), serve as a signal peptide directing secretion. A propeptide spanning residues 28-135 (ASDACKEVVL…TEKVLSRAKR (108 aa)) is cleaved from the precursor. Cadherin domains lie at 136 to 243 (RWAP…YPIF), 244 to 355 (TQKL…LPTF), 356 to 471 (TRTT…GPEC), 472 to 579 (IPPM…FIPK), and 580 to 694 (QTVV…RLGP). The Extracellular segment spans residues 136–694 (RWAPIPCSML…TGYADVRLGP (559 aa)). N-linked (GlcNAc...) asparagine glycosylation occurs at Asn-166. Asn-392, Asn-546, and Asn-629 each carry an N-linked (GlcNAc...) asparagine glycan. A helical transmembrane segment spans residues 695–715 (WAILAILLGIALLFCILFTLV). Over 716–902 (CSVSRASKQQ…RTLAEVCAKR (187 aa)) the chain is Cytoplasmic. Phosphoserine is present on residues Ser-865, Ser-869, and Ser-874.

As to quaternary structure, interacts with DSP, PKP2 and JUP. Interacts with DSG3; the interaction may limit the interaction of DSC3 with p38MAPK family members and therefore repress p38MAPK signaling activation. Expressed in intestinal epithelial cells (at protein level). Expressed in the heart. Expressed in tongue, bladder, stomach, liver, kidney, and lung.

The protein resides in the cell membrane. The protein localises to the cell junction. Its subcellular location is the desmosome. In terms of biological role, a component of desmosome cell-cell junctions which are required for positive regulation of cellular adhesion. Promotes timely incorporation of DSG2 into desmosome intercellular junctions and promotes interaction of desmosome cell junctions with intermediate filament cytokeratin, via modulation of DSP phosphorylation. Plays an important role in desmosome-mediated maintenance of intestinal epithelial cell intercellular adhesion strength and barrier function. Positively regulates wound healing of intestinal mucosa via promotion of epithelial cell migration, and also plays a role in mechanotransduction of force between intestinal epithelial cells and extracellular matrix. May contribute to epidermal cell positioning (stratification) by mediating differential adhesiveness between cells that express different isoforms. May promote p38MAPK signaling activation that facilitates keratinocyte migration. The chain is Desmocollin-2 (Dsc2) from Mus musculus (Mouse).